A 164-amino-acid polypeptide reads, in one-letter code: UPF0304 protein Asuc_0543 (164 aa).

Belongs to the UPF0304 family.

The protein is UPF0304 protein Asuc_0543 of Actinobacillus succinogenes (strain ATCC 55618 / DSM 22257 / CCUG 43843 / 130Z).